The sequence spans 235 residues: NAD(P)H-hydrate epimerase (235 aa).

Residues 18–221 (AAKIDEQLFS…GLVEEHGLQM (204 aa)) enclose the YjeF N-terminal domain. Position 65–69 (65–69 (NNGGD)) interacts with (6S)-NADPHX. K(+)-binding residues include Asn-66 and Asp-127. Residues 131-137 (GFSFKPP) and Asp-160 contribute to the (6S)-NADPHX site. Ser-163 contributes to the K(+) binding site.

This sequence belongs to the NnrE/AIBP family. The cofactor is K(+).

The catalysed reaction is (6R)-NADHX = (6S)-NADHX. The enzyme catalyses (6R)-NADPHX = (6S)-NADPHX. Catalyzes the epimerization of the S- and R-forms of NAD(P)HX, a damaged form of NAD(P)H that is a result of enzymatic or heat-dependent hydration. This is a prerequisite for the S-specific NAD(P)H-hydrate dehydratase to allow the repair of both epimers of NAD(P)HX. The protein is NAD(P)H-hydrate epimerase of Caenorhabditis briggsae.